Reading from the N-terminus, the 540-residue chain is Chaperonin GroEL (540 aa).

Residues 29–32, 86–90, G413, 477–479, and D493 each bind ATP; these read TLGP, DGTTT, and DAL.

Belongs to the chaperonin (HSP60) family. In terms of assembly, forms a cylinder of 14 subunits composed of two heptameric rings stacked back-to-back. Interacts with the co-chaperonin GroES.

The protein resides in the cytoplasm. It carries out the reaction ATP + H2O + a folded polypeptide = ADP + phosphate + an unfolded polypeptide.. Together with its co-chaperonin GroES, plays an essential role in assisting protein folding. The GroEL-GroES system forms a nano-cage that allows encapsulation of the non-native substrate proteins and provides a physical environment optimized to promote and accelerate protein folding. This chain is Chaperonin GroEL, found in Clostridium botulinum (strain Alaska E43 / Type E3).